We begin with the raw amino-acid sequence, 511 residues long: MDTKYKDDLFRKYVQFHEGKVDTTPGKQSGSDEYLRVAAATLLSLHKVDPLYRFRLIQFYEVVESSLRSLSSSSLSALHCAFSMLETMAINLFLFPWKKEFRSIKTYTGPFVYYVKSTLLEKDIRAILKFMGYEPELGTAYKLKELVESLQVKMVSFELFLAKVECEQMLGIHSQVKDKGYSELDVVTERKSSTEDARGCSDALRRRAESREHLTTSMARVALQKSASERAAKDYYKPRVTKPSRSVDAYDSYWESRKPPSKASLSLRKEPLAMDVGEDLKDEIIRPSPSLLTMSSSPHGSPDDLPSISPINGLGLLRSTYFPTQDDVDLYTDSEPRATYRRQDALRSDIWLVKNDAHSIYHKRSPPTKESALSKCQNCGLSCSSSLCQRCDSVCPSASKPSGFPSKASAHDSLVHGAPMREKYVGQTQGLDRLATVHSKPKPSTTATSRCGFCNRAGATNTCTQCSKVSCDPCLGAYHYDPCCRKSELHKFMPNNQLNYKSTQFSHPVYR.

Residues 77–149 (ALHCAFSMLE…AYKLKELVES (73 aa)) form the PUB domain. Residues 320-337 (TYFPTQDDVDLYTDSEPR) carry the PIM motif motif.

The protein belongs to the SPATA2 family. Interacts (via the PIM motif) with RNF31/HOIP (via the PUB domain); the interaction is direct. Interacts (via the PUB domain) with CYLD; the interaction is direct. Expressed in the testis and to a lesser extent in the brain, while skeletal muscle and kidney show weak expression.

The protein localises to the cytoplasm. Its subcellular location is the nucleus. Bridging factor that mediates the recruitment of CYLD to the LUBAC complex, thereby regulating TNF-alpha-induced necroptosis. Acts as a direct binding intermediate that bridges RNF31/HOIP, the catalytic subunit of the LUBAC complex, and the deubiquitinase (CYLD), thereby recruiting CYLD to the TNF-R1 signaling complex (TNF-RSC). Required to activate the 'Met-1'- (linear) and 'Lys-63'-linked deubiquitinase activities of CYLD. Controls the kinase activity of RIPK1 and TNF-alpha-induced necroptosis by promoting 'Met-1'-linked deubiquitination of RIPK1 by CYLD. The protein is Spermatogenesis-associated protein 2 of Rattus norvegicus (Rat).